Reading from the N-terminus, the 158-residue chain is MVLKVYVSGMSGNKEVKKRQQRVLMILDSKNIKYDTVDITEPGKESEKELMQNKSTSNGGTVSDPEPRHPLPPQLFNDDEYCGDYDAFDMANEIDTLEVFLKLAPADTTAVSTAQIELKQENGDAKKEEAETEAEDKKTEAGDGDVDVKEEAAEKAEV.

Residues Thr-40–Met-51 show a composition bias toward basic and acidic residues. Positions Thr-40–Gln-74 are disordered. Residues Gln-52–Thr-61 are compositionally biased toward polar residues. Positions Pro-67–Pro-73 match the SH3-binding motif. A Phosphothreonine modification is found at Thr-109. A disordered region spans residues Leu-118 to Val-158.

The protein belongs to the SH3BGR family.

This chain is SH3 domain-binding glutamic acid-rich protein homolog (Sh3beta), found in Drosophila melanogaster (Fruit fly).